The chain runs to 227 residues: ATP synthase F(0) complex subunit a (227 aa).

6 helical membrane passes run Phe-9–Val-29, Trp-69–Leu-89, Gln-98–Met-118, Glu-132–Ile-152, Leu-165–Met-185, and Ala-190–Ile-210.

Belongs to the ATPase A chain family. In terms of assembly, component of the ATP synthase complex composed at least of ATP5F1A/subunit alpha, ATP5F1B/subunit beta, ATP5MC1/subunit c (homooctomer), MT-ATP6/subunit a, MT-ATP8/subunit 8, ATP5ME/subunit e, ATP5MF/subunit f, ATP5MG/subunit g, ATP5MK/subunit k, ATP5MJ/subunit j, ATP5F1C/subunit gamma, ATP5F1D/subunit delta, ATP5F1E/subunit epsilon, ATP5PF/subunit F6, ATP5PB/subunit b, ATP5PD/subunit d, ATP5PO/subunit OSCP. ATP synthase complex consists of a soluble F(1) head domain (subunits alpha(3) and beta(3)) - the catalytic core - and a membrane F(0) domain - the membrane proton channel (subunits c, a, 8, e, f, g, k and j). These two domains are linked by a central stalk (subunits gamma, delta, and epsilon) rotating inside the F1 region and a stationary peripheral stalk (subunits F6, b, d, and OSCP). Interacts with DNAJC30; interaction is direct.

The protein resides in the mitochondrion inner membrane. The enzyme catalyses H(+)(in) = H(+)(out). In terms of biological role, subunit a, of the mitochondrial membrane ATP synthase complex (F(1)F(0) ATP synthase or Complex V) that produces ATP from ADP in the presence of a proton gradient across the membrane which is generated by electron transport complexes of the respiratory chain. ATP synthase complex consist of a soluble F(1) head domain - the catalytic core - and a membrane F(1) domain - the membrane proton channel. These two domains are linked by a central stalk rotating inside the F(1) region and a stationary peripheral stalk. During catalysis, ATP synthesis in the catalytic domain of F(1) is coupled via a rotary mechanism of the central stalk subunits to proton translocation. With the subunit c (ATP5MC1), forms the proton-conducting channel in the F(0) domain, that contains two crucial half-channels (inlet and outlet) that facilitate proton movement from the mitochondrial intermembrane space (IMS) into the matrix. Protons are taken up via the inlet half-channel and released through the outlet half-channel, following a Grotthuss mechanism. The polypeptide is ATP synthase F(0) complex subunit a (Carassius auratus (Goldfish)).